A 223-amino-acid chain; its full sequence is Phosphoribosylformylglycinamidine synthase subunit PurQ (223 aa).

The 221-residue stretch at phenylalanine 3–valine 223 folds into the Glutamine amidotransferase type-1 domain. Catalysis depends on cysteine 85, which acts as the Nucleophile. Active-site residues include histidine 193 and glutamate 195.

Part of the FGAM synthase complex composed of 1 PurL, 1 PurQ and 2 PurS subunits.

The protein localises to the cytoplasm. It catalyses the reaction N(2)-formyl-N(1)-(5-phospho-beta-D-ribosyl)glycinamide + L-glutamine + ATP + H2O = 2-formamido-N(1)-(5-O-phospho-beta-D-ribosyl)acetamidine + L-glutamate + ADP + phosphate + H(+). The enzyme catalyses L-glutamine + H2O = L-glutamate + NH4(+). The protein operates within purine metabolism; IMP biosynthesis via de novo pathway; 5-amino-1-(5-phospho-D-ribosyl)imidazole from N(2)-formyl-N(1)-(5-phospho-D-ribosyl)glycinamide: step 1/2. In terms of biological role, part of the phosphoribosylformylglycinamidine synthase complex involved in the purines biosynthetic pathway. Catalyzes the ATP-dependent conversion of formylglycinamide ribonucleotide (FGAR) and glutamine to yield formylglycinamidine ribonucleotide (FGAM) and glutamate. The FGAM synthase complex is composed of three subunits. PurQ produces an ammonia molecule by converting glutamine to glutamate. PurL transfers the ammonia molecule to FGAR to form FGAM in an ATP-dependent manner. PurS interacts with PurQ and PurL and is thought to assist in the transfer of the ammonia molecule from PurQ to PurL. This is Phosphoribosylformylglycinamidine synthase subunit PurQ from Staphylococcus aureus (strain MSSA476).